A 398-amino-acid chain; its full sequence is Bone morphogenetic protein 2-A (398 aa).

Residues 1–23 (MVAGIHSLLLLLFYQVLLSGCTG) form the signal peptide. The propeptide occupies 24–284 (LIPEEGKRKY…GHALHKRQKR (261 aa)). N-linked (GlcNAc...) asparagine glycosylation is found at N137, N202, and N340. Disulfide bonds link C298–C363, C327–C395, and C331–C397.

Belongs to the TGF-beta family. As to quaternary structure, homodimer; disulfide-linked.

It is found in the secreted. Its function is as follows. Induces cartilage and bone formation. The chain is Bone morphogenetic protein 2-A (bmp2-a) from Xenopus laevis (African clawed frog).